A 382-amino-acid chain; its full sequence is MAFRNWIGAFGKANALDVNSDLDRGYEAALLIQSLELEYYGDRPIRPDLELSVPKSVQATVLRKFRVAINVCRASLDQLEYQRSQLDPQELRQLQLIESVVNRYSPKRVSTAPTMTRDPDPLPRSLLGVFDKVRRQLNPAGEATLVAGFRRRRDSTLISLKVLLLLILVPLLVQQVSRTYIISPAVDRFAPDLPFLSYPKPQLEEQAVEKLRVYKAEIEFDALLRGDTIPSQEELQQQLGKKASELKEEADAESTHAVKNVLADISATIAFVVVCLFSREELRVLRGFFDEAVYGLSDSAKAFAIILFTDIFVGFHSPEGWTVLLDGIANHFGFPARENFILLFIATFPVILATIFKYWIFRYLNRVSPSSVATLRGMNGGG.

4 consecutive transmembrane segments (helical) span residues 156 to 176, 257 to 277, 305 to 325, and 340 to 360; these read TLIS…VQQV, AVKN…VCLF, IILF…TVLL, and FILL…KYWI.

The protein belongs to the CemA family.

It is found in the cell inner membrane. Its function is as follows. Required for H(+) efflux immediately after light irradiation to form a rapid H(+) concentration gradient across the thylakoid membranes. Together with PxcL, contributes to transient H(+) uptake following dark to light transition. This is Proton extrusion protein PxcA from Synechococcus sp. (strain CC9311).